We begin with the raw amino-acid sequence, 465 residues long: ATP synthase subunit beta (465 aa).

152-159 (GGAGVGKT) serves as a coordination point for ATP.

The protein belongs to the ATPase alpha/beta chains family. F-type ATPases have 2 components, CF(1) - the catalytic core - and CF(0) - the membrane proton channel. CF(1) has five subunits: alpha(3), beta(3), gamma(1), delta(1), epsilon(1). CF(0) has three main subunits: a(1), b(2) and c(9-12). The alpha and beta chains form an alternating ring which encloses part of the gamma chain. CF(1) is attached to CF(0) by a central stalk formed by the gamma and epsilon chains, while a peripheral stalk is formed by the delta and b chains.

The protein localises to the cell inner membrane. The catalysed reaction is ATP + H2O + 4 H(+)(in) = ADP + phosphate + 5 H(+)(out). Functionally, produces ATP from ADP in the presence of a proton gradient across the membrane. The catalytic sites are hosted primarily by the beta subunits. The protein is ATP synthase subunit beta of Campylobacter fetus subsp. fetus (strain 82-40).